The sequence spans 214 residues: Charged multivesicular body protein 2b-A (214 aa).

Residues Gln-25 to Lys-55 adopt a coiled-coil conformation. Residues Met-178–Asp-214 are disordered. The short motif at Glu-202–Gly-212 is the MIT-interacting motif element.

It belongs to the SNF7 family. Probable core component of the endosomal sorting required for transport complex III (ESCRT-III). ESCRT-III components are thought to multimerize to form a flat lattice on the perimeter membrane of the endosome.

The protein resides in the cytoplasm. The protein localises to the cytosol. It is found in the late endosome membrane. Its function is as follows. Probable core component of the endosomal sorting required for transport complex III (ESCRT-III) which is involved in multivesicular bodies (MVBs) formation and sorting of endosomal cargo proteins into MVBs. MVBs contain intraluminal vesicles (ILVs) that are generated by invagination and scission from the limiting membrane of the endosome and mostly are delivered to lysosomes enabling degradation of membrane proteins, such as stimulated growth factor receptors, lysosomal enzymes and lipids. The chain is Charged multivesicular body protein 2b-A (chmp2b-a) from Xenopus laevis (African clawed frog).